The following is a 222-amino-acid chain: 3-dehydroquinate dehydratase (222 aa).

Residues Glu29 to Arg31 and Arg55 each bind 3-dehydroquinate. His112 functions as the Proton donor/acceptor in the catalytic mechanism. Lys139 functions as the Schiff-base intermediate with substrate in the catalytic mechanism. Residues Arg178, Ser199, and Gln203 each contribute to the 3-dehydroquinate site.

This sequence belongs to the type-I 3-dehydroquinase family. As to quaternary structure, homodimer.

The catalysed reaction is 3-dehydroquinate = 3-dehydroshikimate + H2O. The protein operates within metabolic intermediate biosynthesis; chorismate biosynthesis; chorismate from D-erythrose 4-phosphate and phosphoenolpyruvate: step 3/7. Its function is as follows. Involved in the third step of the chorismate pathway, which leads to the biosynthesis of aromatic amino acids. Catalyzes the cis-dehydration of 3-dehydroquinate (DHQ) and introduces the first double bond of the aromatic ring to yield 3-dehydroshikimate. The polypeptide is 3-dehydroquinate dehydratase (Dehalococcoides mccartyi (strain ATCC BAA-2100 / JCM 16839 / KCTC 5957 / BAV1)).